Here is a 347-residue protein sequence, read N- to C-terminus: Dihydroorotase (347 aa).

The Zn(2+) site is built by His13 and His15. Substrate contacts are provided by residues 15 to 17 (HLR) and Asn41. Residues Lys99, His136, and His174 each coordinate Zn(2+). The residue at position 99 (Lys99) is an N6-carboxylysine. His136 lines the substrate pocket. Residue Leu219 coordinates substrate. Asp247 is a Zn(2+) binding site. Asp247 is a catalytic residue. Substrate is bound by residues His251 and Ala263.

This sequence belongs to the metallo-dependent hydrolases superfamily. DHOase family. Class II DHOase subfamily. In terms of assembly, homodimer. The cofactor is Zn(2+).

The catalysed reaction is (S)-dihydroorotate + H2O = N-carbamoyl-L-aspartate + H(+). It participates in pyrimidine metabolism; UMP biosynthesis via de novo pathway; (S)-dihydroorotate from bicarbonate: step 3/3. Functionally, catalyzes the reversible cyclization of carbamoyl aspartate to dihydroorotate. The sequence is that of Dihydroorotase from Sinorhizobium medicae (strain WSM419) (Ensifer medicae).